Here is an 848-residue protein sequence, read N- to C-terminus: Transforming growth factor beta receptor type 3 (848 aa).

Positions 1-20 are cleaved as a signal peptide; that stretch reads MTLHCVVALFALISSCLATA. Over 21 to 784 the chain is Extracellular; sequence GPEPGVQCAL…IFHGLDTLTV (764 aa). N-linked (GlcNAc...) asparagine glycosylation is found at asparagine 34 and asparagine 141. The cysteines at positions 52 and 197 are disulfide-linked. The interval 390 to 448 is disordered; it reads SGEGAARHGGLPFPFPYIPRRGRQDGGKDRLPRPKDPVVPSIQLLPGPREPQEAQGSRD. Over residues 411-425 the composition is skewed to basic and acidic residues; that stretch reads GRQDGGKDRLPRPKD. The ZP domain occupies 454 to 729; sequence RCDSEKMLVA…PKCVLPDEAC (276 aa). Asparagine 491 is a glycosylation site (N-linked (GlcNAc...) asparagine). O-linked (Xyl...) (glycosaminoglycan) serine glycans are attached at residues serine 529, serine 533, and serine 544. N-linked (GlcNAc...) asparagine glycosylation is found at asparagine 570, asparagine 589, and asparagine 696. 3 disulfide bridges follow: cysteine 638–cysteine 704, cysteine 659–cysteine 729, and cysteine 709–cysteine 722. Residues 736-750 form an interaction with TGF-beta ligand region; the sequence is MIWAMMQNKKTFTKP. The helical transmembrane segment at 785-806 threads the bilayer; sequence MGIAFAAFVIGALLTGALWYIY. Residues 807-848 are Cytoplasmic-facing; the sequence is SHTGDSAGRQPVPTSPPASENSSAAHSLGSTQSTPCSSSSAA. The disordered stretch occupies residues 813 to 848; that stretch reads AGRQPVPTSPPASENSSAAHSLGSTQSTPCSSSSAA. Over residues 833–848 the composition is skewed to low complexity; that stretch reads SLGSTQSTPCSSSSAA. Position 837 is a phosphothreonine (threonine 837).

Forms homodimers and homooligomers. Interacts with DYNLT4. Interacts with integrin ITGA5:ITGB1; this interaction promotes the internalization and trafficking of ITGA5:ITGB1 into endocytic vesicles. Interacts with TGFB1, BMP2, BMP5, BMP7 or GDF5 and inhibin A via the ligand binding domains. Interacts with ALK3/BMPR1A; this interaction results in the cell surface retention of BMPR1A. Interacts with ALK6/BMPR1B; this interaction enhances BMPR1B-mediated stimulation of the BMP signaling pathway. Interacts with the scaffolding protein beta-arrestin2/ARRB2; this interaction mediates internalization of TGFBR3 and thus regulates migration, actin cytoskeleton and activation of CDC42. Extensively modified by glycosaminoglycan groups (GAG). Post-translationally, phosphorylated in the cytoplasmic domain by the type II receptor TGFBR2 at THR-837 to mediate recruitment of ARRB2 and subsequent internalization of TGFBR2 and TGFBR3.

The protein localises to the cell membrane. Its subcellular location is the secreted. The protein resides in the extracellular space. It is found in the extracellular matrix. In terms of biological role, cell surface receptor that regulates diverse cellular processes including cell proliferation, differentiation, migration, and apoptosis. Initiates BMP, inhibin, and TGF-beta signaling pathways by interacting with different ligands including TGFB1, BMP2, BMP5, BMP7 or GDF5. Alternatively, acts as a cell surface coreceptor for BMP ligands, serving to enhance ligand binding by differentially regulating BMPR1A/ALK3 and BMPR1B/ALK6 receptor trafficking. Promotes epithelial cell adhesion, focal adhesion formation and integrin signaling during epithelial cell spreading on fibronectin. By interacting with the scaffolding protein beta-arrestin2/ARRB2, regulates migration or actin cytoskeleton and promotes the activation of CDC42 as well as the inhibition of NF-kappa-B. In gonadotrope cells, acts as an inhibin A coreceptor and regulates follicle-stimulating hormone (FSH) levels and female fertility. Plays a role in the inhibition of directed and random cell migration in epithelial cells by altering the actin cytoskeletal organization. Participates in epithelial-mesenchymal transformation (EMT) upon binding to BMP2 or TGFB2, by activating the PAR6/SMURF1/RHOA pathway. This Sus scrofa (Pig) protein is Transforming growth factor beta receptor type 3 (TGFBR3).